A 269-amino-acid chain; its full sequence is MGSLANNIMVVGAVLAALVVGGSCGPPKVPPGPNITTNYNGKWLTARATWYGQPNGAGAPDNGGACGIKNVNLPPYSGMTACGNVPIFKDGKGCGSCYEVRCKEKPECSGNPVTVFITDMNYEPIAPYHFDLSGKAFGSLAKPGLNDKLRHCGIMDVEFRRVRCKYPAGQKIVFHIEKGCNPNYVAVLVKFVADDGDIVLMEIQDKLSAEWKPMKLSWGAIWRMDTAKALKGPFSIRLTSESGKKVIAKDIIPANWRPDAVYTSNVQFY.

The first 24 residues, 1-24, serve as a signal peptide directing secretion; sequence MGSLANNIMVVGAVLAALVVGGSC. Asn34 is a glycosylation site (N-linked (GlcNAc...) asparagine). In terms of domain architecture, Expansin-like EG45 spans 63–169; it reads GGACGIKNVN…RRVRCKYPAG (107 aa). Cystine bridges form between Cys66–Cys94, Cys97–Cys164, and Cys102–Cys108. One can recognise an Expansin-like CBD domain in the interval 183–264; it reads NYVAVLVKFV…NWRPDAVYTS (82 aa).

It belongs to the expansin family. Expansin B subfamily. Expressed in anthers and pollen.

It is found in the secreted. The protein localises to the cell wall. It localises to the membrane. May aid fertilization by loosening the cell wall of the stigma and style, thereby facilitating penetration of the pollen tube. Acts selectively on grass cell walls, which are relatively poor in pectins and xyloglucans and rich in glucuronoarabinoxylans and (1-3),(1-4)-beta-D-glucans, when compared with cell walls of other angiosperms, including other monocots. The sequence is that of Expansin-B9 (EXPB9) from Zea mays (Maize).